We begin with the raw amino-acid sequence, 280 residues long: Transcription factor HES-1 (280 aa).

The segment at 1 to 44 (MPADIMEKNSSSPVAATPASVNTTPDKPKTASEHRKSSKPIMEK) is disordered. Positions 10–21 (SSSPVAATPASV) are enriched in low complexity. Residues 26–35 (DKPKTASEHR) show a composition bias toward basic and acidic residues. Residues 34–91 (HRKSSKPIMEKRRRARINESLSQLKTLILDALKKDSSRHSKLEKADILEMTVKHLRNL) enclose the bHLH domain. Residues 110-143 (YRAGFSECMNEVTRFLSTCEGVNTEVRTRLLGHL) form the Orange domain. Disordered regions lie at residues 157–200 (GQPH…PPGG) and 254–280 (TSVGPNAVSPSSGPSLTADSMWRPWRN). 2 stretches are compositionally biased toward pro residues: residues 164-174 (QAPPPPPPGPG) and 181-200 (FAPPPPLVPIPGGAAPPPGG). A compositionally biased stretch (polar residues) spans 254-271 (TSVGPNAVSPSSGPSLTA). Positions 275 to 278 (WRPW) match the WRPW motif motif.

Transcription repression requires formation of a complex with a corepressor protein of the Groucho/TLE family. Interacts with SIRT1. Interacts (via WPRW motif) with TLE1, and more weakly with TLE2. Interacts with HES6. Interacts with an FA complex, composed of FANCA, FANCF, FANCG and FANCL, but not of FANCC, nor FANCE.

The protein localises to the nucleus. Transcriptional repressor of genes that require a bHLH protein for their transcription. May act as a negative regulator of myogenesis by inhibiting the functions of MYOD1 and ASH1. Binds DNA on N-box motifs: 5'-CACNAG-3' with high affinity and on E-box motifs: 5'-CANNTG-3' with low affinity. May play a role in a functional FA core complex response to DNA cross-link damage, being required for the stability and nuclear localization of FA core complex proteins, as well as for FANCD2 monoubiquitination in response to DNA damage. The protein is Transcription factor HES-1 (HES1) of Bos taurus (Bovine).